We begin with the raw amino-acid sequence, 398 residues long: Endoglucanase (398 aa).

The signal sequence occupies residues 1-23; sequence MSPLKCMALAALGAVMFVGSAQA. E58 serves as the catalytic Proton donor. Residue D119 is the Nucleophile of the active site.

The protein belongs to the glycosyl hydrolase 8 (cellulase D) family.

It is found in the secreted. It carries out the reaction Endohydrolysis of (1-&gt;4)-beta-D-glucosidic linkages in cellulose, lichenin and cereal beta-D-glucans.. It functions in the pathway glycan metabolism; bacterial cellulose biosynthesis. Hydrolyzes carboxymethylcellulose. This chain is Endoglucanase (bcsZ), found in Pseudomonas fluorescens (strain SBW25).